A 492-amino-acid chain; its full sequence is Trehalose-phosphatase (492 aa).

The interval 1–55 is disordered; that stretch reads MTETVTDQGKQRSSKLQKNEAAKDEQVEGKGKETLESGTDKSAEQNSSLLVGQPD. Basic and acidic residues predominate over residues 17-43; sequence QKNEAAKDEQVEGKGKETLESGTDKSA. Asp-213 and Asp-215 together coordinate Mg(2+). The Proton donor/acceptor role is filled by Asp-215. Position 332–334 (332–334) interacts with substrate; sequence QRK. Asp-424 serves as a coordination point for Mg(2+).

The protein belongs to the gob-1 trehalose phosphatase family. Mg(2+) serves as cofactor.

The enzyme catalyses alpha,alpha-trehalose 6-phosphate + H2O = alpha,alpha-trehalose + phosphate. Its activity is regulated as follows. Inhibited by trehalose 6-sulfate. In terms of biological role, catalyzes the hydrolysis of trehalose 6-phosphate to trehalose and phosphate; prevents the accumulation of toxic levels of trehalose 6-phosphate. This chain is Trehalose-phosphatase, found in Brugia malayi (Filarial nematode worm).